The sequence spans 1434 residues: Probable ATP-dependent RNA helicase spindle-E (1434 aa).

The Helicase ATP-binding domain occupies 126-295 (INAINENPVV…FANESSAPPV (170 aa)). Position 139–146 (139–146 (GETGCGKT)) interacts with ATP. Residues 241 to 244 (DEVH) carry the DEAH box motif. Residues 356–527 (TGKSYNQSLR…NCVLKAKELK (172 aa)) enclose the Helicase C-terminal domain. Residues 936–999 (AGAITKGLML…RLMSQDLLRH (64 aa)) enclose the Tudor domain.

Belongs to the DEAD box helicase family. DEAH subfamily.

It localises to the cytoplasm. The catalysed reaction is ATP + H2O = ADP + phosphate + H(+). In terms of biological role, probable ATP-binding RNA helicase which plays a central role during spermatogenesis and oogenesis by repressing transposable elements and preventing their mobilization, which is essential for the germline integrity. Acts via the piRNA metabolic process, which mediates the repression of transposable elements during meiosis by forming complexes composed of piRNAs and Piwi and govern the methylation and subsequent repression of transposons. Involved in the repression of LTR retrotransposon copia. Also involved in telomere regulation by repressing specialized telomeric retroelements HeT-A, TAHRE, and TART; Drosophila telomeres being maintained by transposition of specialized telomeric retroelements. Involved in telomeric trans-silencing, a repression mechanism by which a transposon or a transgene inserted in subtelomeric heterochromatin has the capacity to repress in trans in the female germline, a homologous transposon, or transgene located in euchromatin. Involved in the repression of testis-expressed Stellate genes by the homologous Su(Ste) repeats. Required for anteroposterior and dorsoventral axis formation during oogenesis. The protein is Probable ATP-dependent RNA helicase spindle-E (spn-E) of Drosophila persimilis (Fruit fly).